Consider the following 313-residue polypeptide: Olfactory receptor 4M1 (313 aa).

At 1-25 (MEPANDTTVTEFILTGLSQTREVQL) the chain is on the extracellular side. A glycan (N-linked (GlcNAc...) asparagine) is linked at asparagine 5. Residues 26 to 46 (VLFVIFLSFYLFILPVNILII) form a helical membrane-spanning segment. Over 47–57 (CTIRLDSHLSS) the chain is Cytoplasmic. Residues 58-78 (PMYFLLANLAFLDIWYSSITA) traverse the membrane as a helical segment. The Extracellular segment spans residues 79–97 (PKMLVDFFVERKIISFGGC). An intrachain disulfide couples cysteine 97 to cysteine 179. A helical transmembrane segment spans residues 98–118 (IAQLFFLHFVGASEMFLLTVM). Residues 119–142 (AFDRYAAICRPLHYATIMNRRLCC) lie on the Cytoplasmic side of the membrane. A helical membrane pass occupies residues 143-163 (ILVALSWTGGFVHSIIQVALI). Over 164–204 (VRLPFCGPNELDNYFCDITQVVRIACANTFLEEMVMIFSSG) the chain is Extracellular. A helical membrane pass occupies residues 205-225 (LISVVCFIALLMSYAFLLTML). Residues 226–238 (KKHSSSGESTSRA) are Cytoplasmic-facing. Residues 239–259 (ISTCYSHITIVVLMFGPSIYI) traverse the membrane as a helical segment. The Extracellular portion of the chain corresponds to 260 to 270 (YARPFDSFSLD). A helical membrane pass occupies residues 271–291 (KVVSVFHTVIFPLLNPIIYTL). The Cytoplasmic segment spans residues 292 to 313 (RNKEVKAAMRKLVNRYIFCKEK).

Belongs to the G-protein coupled receptor 1 family. In terms of tissue distribution, highly expressed in liver but not in adipose tissue. Also expressed at high level in testis.

The protein resides in the cell membrane. Functionally, olfactory receptor that acts as a receptor of Asprosin hormone at the surface of hepatocytes to promote hepatocyte glucose release. Also binds Asprosin in the arcuate nucleus of the hypothalamus, thereby stimulating appetite by promoting orexigenic AgRP neuronal activity. In testis, Asprosin-binding promotes sperm progressive motility and enhances male fertility. The activity of this receptor is mediated by G proteins which activate adenylyl cyclase, resulting in an elevation of intracellular cAMP. The sequence is that of Olfactory receptor 4M1 from Mus musculus (Mouse).